The chain runs to 215 residues: LexA repressor (215 aa).

Residues 28 to 48 constitute a DNA-binding region (H-T-H motif); it reads RAEIAAELGFSSPNAAEEHLR. Catalysis depends on for autocatalytic cleavage activity residues Ser-133 and Lys-170.

Belongs to the peptidase S24 family. Homodimer.

It carries out the reaction Hydrolysis of Ala-|-Gly bond in repressor LexA.. In terms of biological role, represses a number of genes involved in the response to DNA damage (SOS response), including recA and lexA. In the presence of single-stranded DNA, RecA interacts with LexA causing an autocatalytic cleavage which disrupts the DNA-binding part of LexA, leading to derepression of the SOS regulon and eventually DNA repair. The sequence is that of LexA repressor from Burkholderia ambifaria (strain ATCC BAA-244 / DSM 16087 / CCUG 44356 / LMG 19182 / AMMD) (Burkholderia cepacia (strain AMMD)).